A 246-amino-acid chain; its full sequence is Ribonuclease 3 (246 aa).

An RNase III domain is found at A16–G146. Position 59 (E59) interacts with Mg(2+). Residue D63 is part of the active site. Mg(2+) contacts are provided by N132 and E135. The active site involves E135. Positions D173–A242 constitute a DRBM domain.

The protein belongs to the ribonuclease III family. Homodimer. Mg(2+) is required as a cofactor.

The protein localises to the cytoplasm. It catalyses the reaction Endonucleolytic cleavage to 5'-phosphomonoester.. Functionally, digests double-stranded RNA. Involved in the processing of primary rRNA transcript to yield the immediate precursors to the large and small rRNAs (23S and 16S). Processes some mRNAs, and tRNAs when they are encoded in the rRNA operon. Processes pre-crRNA and tracrRNA of type II CRISPR loci if present in the organism. The sequence is that of Ribonuclease 3 from Geobacter metallireducens (strain ATCC 53774 / DSM 7210 / GS-15).